Consider the following 122-residue polypeptide: Large ribosomal subunit protein uL14 (122 aa).

It belongs to the universal ribosomal protein uL14 family. As to quaternary structure, part of the 50S ribosomal subunit. Forms a cluster with proteins L3 and L19. In the 70S ribosome, L14 and L19 interact and together make contacts with the 16S rRNA in bridges B5 and B8.

Functionally, binds to 23S rRNA. Forms part of two intersubunit bridges in the 70S ribosome. The chain is Large ribosomal subunit protein uL14 from Shewanella baltica (strain OS223).